Reading from the N-terminus, the 197-residue chain is Adenylyl-sulfate kinase (197 aa).

33 to 40 provides a ligand contact to ATP; sequence GLSGSGKS. Ser107 functions as the Phosphoserine intermediate in the catalytic mechanism.

It belongs to the APS kinase family.

The enzyme catalyses adenosine 5'-phosphosulfate + ATP = 3'-phosphoadenylyl sulfate + ADP + H(+). The protein operates within sulfur metabolism; hydrogen sulfide biosynthesis; sulfite from sulfate: step 2/3. Catalyzes the synthesis of activated sulfate. In Bacillus velezensis (strain DSM 23117 / BGSC 10A6 / LMG 26770 / FZB42) (Bacillus amyloliquefaciens subsp. plantarum), this protein is Adenylyl-sulfate kinase.